Consider the following 173-residue polypeptide: Co-chaperone protein HscB (173 aa).

A J domain is found at 2-74 (DYFTLFGLPV…LKRAEYMLSL (73 aa)).

Belongs to the HscB family. In terms of assembly, interacts with HscA and stimulates its ATPase activity. Interacts with IscU.

Functionally, co-chaperone involved in the maturation of iron-sulfur cluster-containing proteins. Seems to help targeting proteins to be folded toward HscA. This chain is Co-chaperone protein HscB, found in Serratia proteamaculans (strain 568).